The following is a 561-amino-acid chain: Sperm-tail PG-rich repeat-containing protein 2 (561 aa).

STPGR repeat units follow at residues 21-34 (VGPG…PKQQ), 63-72 (PGPAHYNVSQ), and 97-104 (GPGPGSYN). Positions 123–143 (PAVSRNIDIPSIPSSGKSHGY) are disordered. 7 STPGR repeats span residues 164 to 191 (GPAY…NATG), 200 to 210 (GPGPGQYDIIQ), 250 to 285 (PGPG…TERF), 292 to 299 (TPAPGTYN), 334 to 367 (LPGP…FGSS), 421 to 438 (LPAP…MSQV), and 471 to 481 (GPGPATYSPVL).

In Mus musculus (Mouse), this protein is Sperm-tail PG-rich repeat-containing protein 2 (Stpg2).